A 280-amino-acid chain; its full sequence is CAG pathogenicity island protein 12 (280 aa).

Positions 1–20 (MKLRASVLIGATILCLILSA) are cleaved as a signal peptide. Cys21 carries N-palmitoyl cysteine lipidation. Cys21 carries the S-diacylglycerol cysteine lipid modification.

Its subcellular location is the cell membrane. The protein is CAG pathogenicity island protein 12 (cagT) of Helicobacter pylori (strain ATCC 700392 / 26695) (Campylobacter pylori).